Here is a 363-residue protein sequence, read N- to C-terminus: Peptide chain release factor 1 (363 aa).

Glutamine 237 is subject to N5-methylglutamine. Positions 284–296 (EDEKRRSAEESTR) are enriched in basic and acidic residues. Residues 284 to 305 (EDEKRRSAEESTRRSLVASGDR) are disordered.

Belongs to the prokaryotic/mitochondrial release factor family. Methylated by PrmC. Methylation increases the termination efficiency of RF1.

It is found in the cytoplasm. Its function is as follows. Peptide chain release factor 1 directs the termination of translation in response to the peptide chain termination codons UAG and UAA. In Shewanella baltica (strain OS195), this protein is Peptide chain release factor 1.